The sequence spans 345 residues: N-acetyl-gamma-glutamyl-phosphate reductase (345 aa).

The active site involves Cys-149.

It belongs to the NAGSA dehydrogenase family. Type 1 subfamily.

The protein resides in the cytoplasm. The catalysed reaction is N-acetyl-L-glutamate 5-semialdehyde + phosphate + NADP(+) = N-acetyl-L-glutamyl 5-phosphate + NADPH + H(+). Its pathway is amino-acid biosynthesis; L-arginine biosynthesis; N(2)-acetyl-L-ornithine from L-glutamate: step 3/4. In terms of biological role, catalyzes the NADPH-dependent reduction of N-acetyl-5-glutamyl phosphate to yield N-acetyl-L-glutamate 5-semialdehyde. The chain is N-acetyl-gamma-glutamyl-phosphate reductase from Geobacillus sp. (strain WCH70).